Here is a 435-residue protein sequence, read N- to C-terminus: NADH-quinone oxidoreductase subunit D (435 aa).

It belongs to the complex I 49 kDa subunit family. NDH-1 is composed of 14 different subunits. Subunits NuoB, C, D, E, F, and G constitute the peripheral sector of the complex.

It is found in the cell inner membrane. The catalysed reaction is a quinone + NADH + 5 H(+)(in) = a quinol + NAD(+) + 4 H(+)(out). Its function is as follows. NDH-1 shuttles electrons from NADH, via FMN and iron-sulfur (Fe-S) centers, to quinones in the respiratory chain. The immediate electron acceptor for the enzyme in this species is believed to be ubiquinone. Couples the redox reaction to proton translocation (for every two electrons transferred, four hydrogen ions are translocated across the cytoplasmic membrane), and thus conserves the redox energy in a proton gradient. This chain is NADH-quinone oxidoreductase subunit D, found in Xanthomonas axonopodis pv. citri (strain 306).